We begin with the raw amino-acid sequence, 256 residues long: Nuclear shuttle protein (256 aa).

The Bipartite nuclear localization signal signature appears at 21–42 (YQGFRRTAIVTRHDGKRRQHQS). The Nuclear localization signal motif lies at 81–96 (QLGKIEPNRCRSYIKL). The interaction with Arabidopsis thaliana NSI protein stretch occupies residues 150–187 (ELFGARINSHGNLAVMPSLKDRFYIRHLLKRVLSVDKD).

This sequence belongs to the begomovirus nuclear shuttle protein family. Binds to single-stranded and double-stranded viral DNA. Interacts with the host nuclear shuttle interacting (NSI) protein. This interaction may allow NSP to recruit NSI monomers to the viral genome and thus regulate nuclear export of viral genome by NSP.

The protein localises to the host nucleus. It is found in the host cytoplasm. Its subcellular location is the host cell membrane. Functionally, binds to the genomic viral ssDNA, shuttles it into and out of the cell nucleus. Begomoviruses use 2 proteins to transport their DNA from cell to cell. The nuclear shuttle protein (NSP) shuttles it between nucleus and cytoplasm and the movement protein (MP) probably transports the DNA-NSP complex to the cell periphery and facilitates movement across the cell wall. In Macroptilium lathyroides (Lima bean), this protein is Nuclear shuttle protein.